Consider the following 150-residue polypeptide: UPF0178 protein Bcep18194_A4809 (150 aa).

This sequence belongs to the UPF0178 family.

The protein is UPF0178 protein Bcep18194_A4809 of Burkholderia lata (strain ATCC 17760 / DSM 23089 / LMG 22485 / NCIMB 9086 / R18194 / 383).